The primary structure comprises 366 residues: tRNA/tmRNA (uracil-C(5))-methyltransferase (366 aa).

Residues Q190, Y218, N223, E239, and D299 each coordinate S-adenosyl-L-methionine. C324 serves as the catalytic Nucleophile. The Proton acceptor role is filled by E358.

The protein belongs to the class I-like SAM-binding methyltransferase superfamily. RNA M5U methyltransferase family. TrmA subfamily.

The enzyme catalyses uridine(54) in tRNA + S-adenosyl-L-methionine = 5-methyluridine(54) in tRNA + S-adenosyl-L-homocysteine + H(+). It carries out the reaction uridine(341) in tmRNA + S-adenosyl-L-methionine = 5-methyluridine(341) in tmRNA + S-adenosyl-L-homocysteine + H(+). Functionally, dual-specificity methyltransferase that catalyzes the formation of 5-methyluridine at position 54 (m5U54) in all tRNAs, and that of position 341 (m5U341) in tmRNA (transfer-mRNA). This Klebsiella pneumoniae (strain 342) protein is tRNA/tmRNA (uracil-C(5))-methyltransferase.